Consider the following 333-residue polypeptide: Glycerol-3-phosphate dehydrogenase [NAD(P)+] (333 aa).

Positions 10, 11, and 105 each coordinate NADPH. Sn-glycerol 3-phosphate is bound by residues Lys-105, Gly-136, and Thr-138. Ala-140 contacts NADPH. Residues Lys-191, Asp-244, Ser-254, Arg-255, and Asn-256 each contribute to the sn-glycerol 3-phosphate site. The Proton acceptor role is filled by Lys-191. Position 255 (Arg-255) interacts with NADPH. NADPH is bound by residues Val-279 and Glu-281.

Belongs to the NAD-dependent glycerol-3-phosphate dehydrogenase family.

It is found in the cytoplasm. It catalyses the reaction sn-glycerol 3-phosphate + NAD(+) = dihydroxyacetone phosphate + NADH + H(+). The catalysed reaction is sn-glycerol 3-phosphate + NADP(+) = dihydroxyacetone phosphate + NADPH + H(+). It participates in membrane lipid metabolism; glycerophospholipid metabolism. Catalyzes the reduction of the glycolytic intermediate dihydroxyacetone phosphate (DHAP) to sn-glycerol 3-phosphate (G3P), the key precursor for phospholipid synthesis. In Syntrophotalea carbinolica (strain DSM 2380 / NBRC 103641 / GraBd1) (Pelobacter carbinolicus), this protein is Glycerol-3-phosphate dehydrogenase [NAD(P)+].